The primary structure comprises 91 residues: Potassium channel toxin BmTXK-beta-2 (91 aa).

Positions 1-19 are cleaved as a signal peptide; the sequence is MQRNLVVLLFLGMVALSSC. The propeptide occupies 20–27; it reads GLREKHFQ. Residues 54-91 form the BetaSPN-type CS-alpha/beta domain; sequence QFGCPAYQGYCDDHCQDIKKEEGFCHGFKCKCGIPMGF. 3 disulfide bridges follow: C57/C78, C64/C83, and C68/C85.

It belongs to the long chain scorpion toxin family. Class 1 subfamily. As to expression, expressed by the venom gland.

It is found in the secreted. In terms of biological role, inhibits voltage-gated potassium channel. This is Potassium channel toxin BmTXK-beta-2 from Olivierus martensii (Manchurian scorpion).